Consider the following 402-residue polypeptide: 2-pyrone synthase (402 aa).

Positions 60, 63, 169, 272, 274, 310, 312, and 313 each coordinate acetoacetyl-CoA. The active site involves Cys169.

The protein belongs to the thiolase-like superfamily. Chalcone/stilbene synthases family. In terms of tissue distribution, expressed in both vegetative and reproductive organs. The expression is strong in the leaf, scape (the inflorescence stem) and corolla (both in the ligule and the unpigmented tube), moderate in the bract and carpel, detectable in the root and pappus but not detectable in the stamen.

The catalysed reaction is 2 malonyl-CoA + acetyl-CoA + 2 H(+) = triacetate lactone + 2 CO2 + 3 CoA. Functionally, polyketide synthase, which uses acetyl-CoA and two condensation reactions with malonyl-CoA to form triacetic acid lactone (also called methylpyrone), a precursor of phytoalexin. May participate in insect and pathogen resistance. The chain is 2-pyrone synthase from Gerbera hybrida (Daisy).